The following is a 149-amino-acid chain: Calmodulin (149 aa).

N-acetylalanine is present on Ala2. EF-hand domains follow at residues 8 to 43 (EQIAEFKEAFSLFDKDGDGTITTKELGTVMRSLGQN), 44 to 79 (PTEAELLVMINEVDADGNGTIDFPEFLTMMARKMKD), 81 to 116 (DSEEEIKEAFKVFDKDGNGYISAAELRHVMTNLGEK), and 117 to 149 (LSEDEVEEMIREADVDGDGQINYEEFVKMMMSK). Residues Asp21, Asp23, Asp25, Thr27, Glu32, Asp57, Asp59, Asn61, Thr63, Glu68, Asp94, Asp96, Asn98, Tyr100, Glu105, Asp130, Asp132, Asp134, Gln136, and Glu141 each coordinate Ca(2+).

The protein belongs to the calmodulin family.

Functionally, calmodulin mediates the control of a large number of enzymes, ion channels and other proteins by Ca(2+). Among the enzymes to be stimulated by the calmodulin-Ca(2+) complex are a number of protein kinases and phosphatases. In Blastocladiella emersonii (Aquatic fungus), this protein is Calmodulin (CMD1).